The sequence spans 516 residues: Probable serine/threonine-protein kinase WNK3 (516 aa).

Positions 22 to 280 (GRYKEVLGKG…AKELLDDPFL (259 aa)) constitute a Protein kinase domain. ATP contacts are provided by residues 102 to 105 (TEVF) and Lys152. Asp169 (proton acceptor) is an active-site residue. The disordered stretch occupies residues 426-451 (SSPKAGAGDSRSPFAPRSNSKLSSAQ). Residues 442-451 (RSNSKLSSAQ) are compositionally biased toward polar residues. The stretch at 457 to 490 (EVGVIVEKLESLLRKQREEIEEMQRDQERIVTEF) forms a coiled coil.

This sequence belongs to the protein kinase superfamily. Ser/Thr protein kinase family. WNK subfamily.

The enzyme catalyses L-seryl-[protein] + ATP = O-phospho-L-seryl-[protein] + ADP + H(+). It carries out the reaction L-threonyl-[protein] + ATP = O-phospho-L-threonyl-[protein] + ADP + H(+). May regulate flowering time by modulating the photoperiod pathway. The protein is Probable serine/threonine-protein kinase WNK3 (WNK3) of Arabidopsis thaliana (Mouse-ear cress).